Consider the following 1488-residue polypeptide: Chromosome partition protein MukB (1488 aa).

34-41 contributes to the ATP binding site; it reads GGNGAGKS. Coiled coils occupy residues 326-418, 444-472, and 509-602; these read LEAD…QYNQ, LDTF…QTAH, and RHLA…RRAP. The tract at residues 666–783 is flexible hinge; the sequence is PGGAEDQRLN…SLPIFGRAAR (118 aa). 3 coiled-coil regions span residues 835-923, 977-1116, and 1209-1265; these read EAEI…AKLE, EMLS…AKAG, and VEAI…LQSV. The tract at residues 1049 to 1074 is disordered; the sequence is ADSGAEERARQRRDELHAQLSNNRSR. Residues 1051–1065 show a composition bias toward basic and acidic residues; it reads SGAEERARQRRDELH.

The protein belongs to the SMC family. MukB subfamily. Homodimerization via its hinge domain. Binds to DNA via its C-terminal region. Interacts, and probably forms a ternary complex, with MukE and MukF via its C-terminal region. The complex formation is stimulated by calcium or magnesium. Interacts with tubulin-related protein FtsZ.

It localises to the cytoplasm. The protein resides in the nucleoid. Its function is as follows. Plays a central role in chromosome condensation, segregation and cell cycle progression. Functions as a homodimer, which is essential for chromosome partition. Involved in negative DNA supercoiling in vivo, and by this means organize and compact chromosomes. May achieve or facilitate chromosome segregation by condensation DNA from both sides of a centrally located replisome during cell division. The protein is Chromosome partition protein MukB of Salmonella agona (strain SL483).